The primary structure comprises 410 residues: Sorting nexin-4 (410 aa).

Residues 11–135 (FIIVSDPQKQ…TFLVSSDWDA (125 aa)) form the PX domain. Positions 58, 60, 84, and 101 each coordinate a 1,2-diacyl-sn-glycero-3-phospho-(1D-myo-inositol-3-phosphate). Positions 329–368 (NQEAARREKISKLESKVQALTTEVENAKKVADAFEKEALK) form a coiled coil.

Belongs to the sorting nexin family.

Its subcellular location is the cytoplasm. The protein localises to the cytosol. The protein resides in the preautophagosomal structure membrane. It localises to the endosome membrane. In terms of biological role, sorting nexin, involved in the separation or division of vacuoles throughout the entire life cycle of the cells. Involved in retrieval of late-Golgi SNAREs from post-Golgi endosomes to the trans-Golgi network, for cytoplasm to vacuole transport (Cvt), and autophagy of large cargos including mitophagy, pexophagy and glycophagy. In Eremothecium gossypii (strain ATCC 10895 / CBS 109.51 / FGSC 9923 / NRRL Y-1056) (Yeast), this protein is Sorting nexin-4 (SNX4).